A 362-amino-acid chain; its full sequence is Phosphoserine aminotransferase (362 aa).

2 residues coordinate L-glutamate: S9 and R42. Residues 76 to 77, W102, T153, D174, and Q197 contribute to the pyridoxal 5'-phosphate site; that span reads GR. N6-(pyridoxal phosphate)lysine is present on K198. 239 to 240 contacts pyridoxal 5'-phosphate; that stretch reads NT.

The protein belongs to the class-V pyridoxal-phosphate-dependent aminotransferase family. SerC subfamily. As to quaternary structure, homodimer. Pyridoxal 5'-phosphate is required as a cofactor.

It localises to the cytoplasm. The catalysed reaction is O-phospho-L-serine + 2-oxoglutarate = 3-phosphooxypyruvate + L-glutamate. The enzyme catalyses 4-(phosphooxy)-L-threonine + 2-oxoglutarate = (R)-3-hydroxy-2-oxo-4-phosphooxybutanoate + L-glutamate. It functions in the pathway amino-acid biosynthesis; L-serine biosynthesis; L-serine from 3-phospho-D-glycerate: step 2/3. The protein operates within cofactor biosynthesis; pyridoxine 5'-phosphate biosynthesis; pyridoxine 5'-phosphate from D-erythrose 4-phosphate: step 3/5. Functionally, catalyzes the reversible conversion of 3-phosphohydroxypyruvate to phosphoserine and of 3-hydroxy-2-oxo-4-phosphonooxybutanoate to phosphohydroxythreonine. The polypeptide is Phosphoserine aminotransferase (Salmonella arizonae (strain ATCC BAA-731 / CDC346-86 / RSK2980)).